The following is a 706-amino-acid chain: Ribosomal RNA large subunit methyltransferase K/L (706 aa).

In terms of domain architecture, THUMP spans 43–154 (LMYQSLLWSR…RDMASVALDL (112 aa)).

This sequence belongs to the methyltransferase superfamily. RlmKL family.

It is found in the cytoplasm. The enzyme catalyses guanosine(2445) in 23S rRNA + S-adenosyl-L-methionine = N(2)-methylguanosine(2445) in 23S rRNA + S-adenosyl-L-homocysteine + H(+). It catalyses the reaction guanosine(2069) in 23S rRNA + S-adenosyl-L-methionine = N(2)-methylguanosine(2069) in 23S rRNA + S-adenosyl-L-homocysteine + H(+). Its function is as follows. Specifically methylates the guanine in position 2445 (m2G2445) and the guanine in position 2069 (m7G2069) of 23S rRNA. This chain is Ribosomal RNA large subunit methyltransferase K/L, found in Yersinia pseudotuberculosis serotype IB (strain PB1/+).